The sequence spans 271 residues: Aspartate/glutamate leucyltransferase (271 aa).

The protein belongs to the R-transferase family. Bpt subfamily.

It localises to the cytoplasm. The catalysed reaction is N-terminal L-glutamyl-[protein] + L-leucyl-tRNA(Leu) = N-terminal L-leucyl-L-glutamyl-[protein] + tRNA(Leu) + H(+). It carries out the reaction N-terminal L-aspartyl-[protein] + L-leucyl-tRNA(Leu) = N-terminal L-leucyl-L-aspartyl-[protein] + tRNA(Leu) + H(+). Functionally, functions in the N-end rule pathway of protein degradation where it conjugates Leu from its aminoacyl-tRNA to the N-termini of proteins containing an N-terminal aspartate or glutamate. This is Aspartate/glutamate leucyltransferase from Acinetobacter baumannii (strain SDF).